The chain runs to 499 residues: 3-beta-hydroxylase (499 aa).

A helical; Signal-anchor for type II membrane protein transmembrane segment spans residues 2 to 22 (FSSFETLILSFVSLFFMMIFI). C441 contacts heme.

It belongs to the cytochrome P450 family. The cofactor is heme.

The protein resides in the membrane. It catalyses the reaction (+)-costunolide + reduced [NADPH--hemoprotein reductase] + O2 = 3beta-hydroxycostunolide + oxidized [NADPH--hemoprotein reductase] + H2O + H(+). It carries out the reaction parthenolide + reduced [NADPH--hemoprotein reductase] + O2 = 3beta-hydroxyparthenolide + oxidized [NADPH--hemoprotein reductase] + H2O + H(+). The protein operates within secondary metabolite biosynthesis; terpenoid biosynthesis. Involved in the biosynthesis of germacrene-derived sesquiterpene lactones. Component of the parthenolide biosynthetic pathway; parthenolide and conjugates are promising anti-cancer drugs highly active against colon cancer cells. Catalyzes the conversion of costunolide and parthenolide to 3-beta-hydroxycostunolide and 3-beta-hydroxyparthenolide, respectively. The polypeptide is 3-beta-hydroxylase (Tanacetum parthenium (Feverfew)).